Reading from the N-terminus, the 337-residue chain is GTPase Obg (337 aa).

In terms of domain architecture, Obg spans 1–158 (MFVDRVIIEL…HHIELELKLI (158 aa)). One can recognise an OBG-type G domain in the interval 159-330 (ADVGLVGFPN…LIEKMTQRLS (172 aa)). Residues 165–172 (GFPNAGKS), 190–194 (FTTLQ), 212–215 (DIPG), 282–285 (NKID), and 311–313 (SAV) each bind GTP. Ser-172 and Thr-192 together coordinate Mg(2+).

Belongs to the TRAFAC class OBG-HflX-like GTPase superfamily. OBG GTPase family. As to quaternary structure, monomer. Mg(2+) is required as a cofactor.

It localises to the cytoplasm. Functionally, an essential GTPase which binds GTP, GDP and possibly (p)ppGpp with moderate affinity, with high nucleotide exchange rates and a fairly low GTP hydrolysis rate. Plays a role in control of the cell cycle, stress response, ribosome biogenesis and in those bacteria that undergo differentiation, in morphogenesis control. The sequence is that of GTPase Obg from Protochlamydia amoebophila (strain UWE25).